A 580-amino-acid polypeptide reads, in one-letter code: Glypican-3 (580 aa).

The signal sequence occupies residues 1–24; sequence MAGTVRTACLVVAMLLSLDFPGQA. The residue at position 25 (Gln-25) is a Pyrrolidone carboxylic acid. Disulfide bonds link Cys-35-Cys-72, Cys-65-Cys-262, Cys-73-Cys-265, Cys-197-Cys-349, Cys-252-Cys-285, Cys-274-Cys-422, and Cys-278-Cys-410. Residues Asn-124 and Asn-241 are each glycosylated (N-linked (GlcNAc...) asparagine). The residue at position 352 (Ser-352) is a Phosphoserine; by FAM20C. N-linked (GlcNAc...) asparagine glycosylation occurs at Asn-418. 2 O-linked (Xyl...) (glycosaminoglycan) serine glycosylation sites follow: Ser-495 and Ser-509. Asn-554 carries GPI-anchor amidated asparagine lipidation. Residues 555–580 constitute a propeptide, removed in mature form; that stretch reads LGNVHSPLKLLTSMAISVVCFFFLVH.

This sequence belongs to the glypican family. In terms of assembly, heterodimer; disulfide-linked. Cleavage by a furin-like convertase results in production of alpha and beta chains which form a disulfide-linked heterodimer. Interacts with DPP4. Interacts with FGF2. Interacts with WNT5A. Also interacts with WNT3A and WNT7B. Interacts with hedgehog protein SHH; the heparan sulfate chains are not required for the interaction. Also interacts with hedgehog protein IHH. Interacts with CD81. Interacts with Wnt receptors FZD4, FZD7 and FZD8; the heparan sulfate chains are required for the interaction. In terms of processing, O-glycosylated; contains heparan sulfate and/or chondroitin sulfate. Post-translationally, cleaved intracellularly by a furin-like convertase to generate 2 subunits, alpha and beta, which remain associated through disulfide bonds and are associated with the cell surface via the GPI-anchor. This processing is essential for its role in inhibition of hedgehog signaling. A second proteolytic event may result in cleavage of the protein on the cell surface, separating it from the GPI-anchor and leading to its shedding from the cell surface. As to expression, detected in placenta (at protein level). Highly expressed in lung, liver and kidney.

Its subcellular location is the cell membrane. Its function is as follows. Cell surface proteoglycan. Negatively regulates the hedgehog signaling pathway when attached via the GPI-anchor to the cell surface by competing with the hedgehog receptor PTC1 for binding to hedgehog proteins. Binding to the hedgehog protein SHH triggers internalization of the complex by endocytosis and its subsequent lysosomal degradation. Positively regulates the canonical Wnt signaling pathway by binding to the Wnt receptor Frizzled and stimulating the binding of the Frizzled receptor to Wnt ligands. Positively regulates the non-canonical Wnt signaling pathway. Binds to CD81 which decreases the availability of free CD81 for binding to the transcriptional repressor HHEX, resulting in nuclear translocation of HHEX and transcriptional repression. Inhibits the dipeptidyl peptidase activity of DPP4. Plays a role in limb patterning and skeletal development by controlling the cellular response to BMP4. Modulates the effects of growth factors BMP2, BMP7 and FGF7 on renal branching morphogenesis. Required for coronary vascular development. Plays a role in regulating cell movements during gastrulation. The polypeptide is Glypican-3 (GPC3) (Homo sapiens (Human)).